The chain runs to 411 residues: CinA-like protein (411 aa).

Belongs to the CinA family.

This is CinA-like protein from Dictyoglomus thermophilum (strain ATCC 35947 / DSM 3960 / H-6-12).